We begin with the raw amino-acid sequence, 842 residues long: Leucine--tRNA ligase (842 aa).

A 'HIGH' region motif is present at residues 44–55 (PYPSANGLHVGH). The 'KMSKS' region signature appears at 619-623 (KMSKS). Residue Lys-622 coordinates ATP.

The protein belongs to the class-I aminoacyl-tRNA synthetase family.

It localises to the cytoplasm. The enzyme catalyses tRNA(Leu) + L-leucine + ATP = L-leucyl-tRNA(Leu) + AMP + diphosphate. The polypeptide is Leucine--tRNA ligase (Borrelia duttonii (strain Ly)).